Here is a 386-residue protein sequence, read N- to C-terminus: 5-amino-6-(D-ribitylamino)uracil--L-tyrosine 4-hydroxyphenyl transferase (386 aa).

One can recognise a Radical SAM core domain in the interval 56 to 303 (VSYVINRNLN…MAVARLYLGD (248 aa)). C70, C74, and C77 together coordinate [4Fe-4S] cluster.

It belongs to the radical SAM superfamily. CofH family. Consists of two subunits, CofG and CofH. The cofactor is [4Fe-4S] cluster.

It catalyses the reaction 5-amino-6-(D-ribitylamino)uracil + L-tyrosine + S-adenosyl-L-methionine = 5-amino-5-(4-hydroxybenzyl)-6-(D-ribitylimino)-5,6-dihydrouracil + 2-iminoacetate + 5'-deoxyadenosine + L-methionine + H(+). It functions in the pathway cofactor biosynthesis; coenzyme F0 biosynthesis. Functionally, catalyzes the radical-mediated synthesis of 5-amino-5-(4-hydroxybenzyl)-6-(D-ribitylimino)-5,6-dihydrouracil from 5-amino-6-(D-ribitylamino)uracil and L-tyrosine. The sequence is that of 5-amino-6-(D-ribitylamino)uracil--L-tyrosine 4-hydroxyphenyl transferase from Synechococcus elongatus (strain ATCC 33912 / PCC 7942 / FACHB-805) (Anacystis nidulans R2).